Reading from the N-terminus, the 343-residue chain is Phosphate acyltransferase (343 aa).

Belongs to the PlsX family. In terms of assembly, homodimer. Probably interacts with PlsY.

The protein resides in the cytoplasm. The enzyme catalyses a fatty acyl-[ACP] + phosphate = an acyl phosphate + holo-[ACP]. It participates in lipid metabolism; phospholipid metabolism. Functionally, catalyzes the reversible formation of acyl-phosphate (acyl-PO(4)) from acyl-[acyl-carrier-protein] (acyl-ACP). This enzyme utilizes acyl-ACP as fatty acyl donor, but not acyl-CoA. In Coxiella burnetii (strain Dugway 5J108-111), this protein is Phosphate acyltransferase.